A 75-amino-acid polypeptide reads, in one-letter code: MKKSERSSRKRLSATVTSDLIDYKNIDLLRRFISERGKILSRRMTKLTSKQQRSVTVSIKRARILALLPFINRDS.

The protein belongs to the bacterial ribosomal protein bS18 family. Part of the 30S ribosomal subunit.

It is found in the plastid. The protein localises to the chloroplast. The protein is Small ribosomal subunit protein bS18c of Psilotum nudum (Whisk fern).